The chain runs to 199 residues: ATP-dependent Clp protease proteolytic subunit (199 aa).

The active-site Nucleophile is the Ser-97. His-122 is a catalytic residue.

Belongs to the peptidase S14 family. As to quaternary structure, fourteen ClpP subunits assemble into 2 heptameric rings which stack back to back to give a disk-like structure with a central cavity, resembling the structure of eukaryotic proteasomes.

The protein resides in the cytoplasm. It catalyses the reaction Hydrolysis of proteins to small peptides in the presence of ATP and magnesium. alpha-casein is the usual test substrate. In the absence of ATP, only oligopeptides shorter than five residues are hydrolyzed (such as succinyl-Leu-Tyr-|-NHMec, and Leu-Tyr-Leu-|-Tyr-Trp, in which cleavage of the -Tyr-|-Leu- and -Tyr-|-Trp bonds also occurs).. In terms of biological role, cleaves peptides in various proteins in a process that requires ATP hydrolysis. Has a chymotrypsin-like activity. Plays a major role in the degradation of misfolded proteins. The chain is ATP-dependent Clp protease proteolytic subunit from Geotalea daltonii (strain DSM 22248 / JCM 15807 / FRC-32) (Geobacter daltonii).